A 455-amino-acid chain; its full sequence is UDP-N-acetylmuramoylalanine--D-glutamate ligase (455 aa).

117 to 123 lines the ATP pocket; it reads GTNGKTT.

The protein belongs to the MurCDEF family.

Its subcellular location is the cytoplasm. The catalysed reaction is UDP-N-acetyl-alpha-D-muramoyl-L-alanine + D-glutamate + ATP = UDP-N-acetyl-alpha-D-muramoyl-L-alanyl-D-glutamate + ADP + phosphate + H(+). The protein operates within cell wall biogenesis; peptidoglycan biosynthesis. Cell wall formation. Catalyzes the addition of glutamate to the nucleotide precursor UDP-N-acetylmuramoyl-L-alanine (UMA). The chain is UDP-N-acetylmuramoylalanine--D-glutamate ligase from Alkaliphilus metalliredigens (strain QYMF).